Consider the following 185-residue polypeptide: Threonylcarbamoyl-AMP synthase (185 aa).

The 183-residue stretch at 3 to 185 (EQAPDEVQEI…VDAISGKVLR (183 aa)) folds into the YrdC-like domain.

This sequence belongs to the SUA5 family. TsaC subfamily.

It is found in the cytoplasm. It carries out the reaction L-threonine + hydrogencarbonate + ATP = L-threonylcarbamoyladenylate + diphosphate + H2O. Its function is as follows. Required for the formation of a threonylcarbamoyl group on adenosine at position 37 (t(6)A37) in tRNAs that read codons beginning with adenine. Catalyzes the conversion of L-threonine, HCO(3)(-)/CO(2) and ATP to give threonylcarbamoyl-AMP (TC-AMP) as the acyladenylate intermediate, with the release of diphosphate. The sequence is that of Threonylcarbamoyl-AMP synthase from Shewanella sediminis (strain HAW-EB3).